The chain runs to 129 residues: Small ribosomal subunit protein uS11 (129 aa).

It belongs to the universal ribosomal protein uS11 family. Part of the 30S ribosomal subunit. Interacts with proteins S7 and S18. Binds to IF-3.

Its function is as follows. Located on the platform of the 30S subunit, it bridges several disparate RNA helices of the 16S rRNA. Forms part of the Shine-Dalgarno cleft in the 70S ribosome. This is Small ribosomal subunit protein uS11 from Aeromonas hydrophila subsp. hydrophila (strain ATCC 7966 / DSM 30187 / BCRC 13018 / CCUG 14551 / JCM 1027 / KCTC 2358 / NCIMB 9240 / NCTC 8049).